We begin with the raw amino-acid sequence, 344 residues long: Phenylalanine--tRNA ligase alpha subunit (344 aa).

Glutamate 256 provides a ligand contact to Mg(2+).

It belongs to the class-II aminoacyl-tRNA synthetase family. Phe-tRNA synthetase alpha subunit type 1 subfamily. As to quaternary structure, tetramer of two alpha and two beta subunits. Mg(2+) serves as cofactor.

It is found in the cytoplasm. It carries out the reaction tRNA(Phe) + L-phenylalanine + ATP = L-phenylalanyl-tRNA(Phe) + AMP + diphosphate + H(+). This is Phenylalanine--tRNA ligase alpha subunit from Geobacillus kaustophilus (strain HTA426).